A 710-amino-acid polypeptide reads, in one-letter code: Ephexin-1 (710 aa).

Basic and acidic residues-rich tracts occupy residues 1–11 (METRESEDLEK) and 26–41 (EPAKVKPELLPEKEET). The disordered stretch occupies residues 1–143 (METRESEDLE…PGNGATPEEW (143 aa)). The tract at residues 1-273 (METRESEDLE…LEILQPEEIK (273 aa)) is regulatory region; modulates activity toward RHOA, RAC1 and CDC42. Composition is skewed to polar residues over residues 89–102 (ADSQDNGKSVNEPL) and 127–136 (MSESSSTPGN). Tyr-179 bears the Phosphotyrosine mark. A disordered region spans residues 194-236 (RRQQDAEIEDNTNGSPASEDTPEEEEEEEEEEEPASPPERKTL). The span at 213–227 (DTPEEEEEEEEEEEP) shows a compositional bias: acidic residues. Positions 273 to 457 (KLQEAMFELV…EMVVKACNEG (185 aa)) constitute a DH domain. Residues 489–601 (WLLKQGELQQ…WMTSLAPNRR (113 aa)) form the PH domain. The 62-residue stretch at 612-673 (LDCPQVQCVH…PSSMTEEILN (62 aa)) folds into the SH3 domain. Residues 687 to 699 (VHKMDDPQRSQNK) show a composition bias toward basic and acidic residues. Positions 687–710 (VHKMDDPQRSQNKDRRKLGSRNRQ) are disordered. A compositionally biased stretch (basic residues) spans 700–710 (DRRKLGSRNRQ).

Interacts with CDK5R1 and EPHA4; activated by EPHA4 through the CDK5 kinase. In terms of processing, src-dependent phosphorylation at Tyr-179 upon EPHA4 activation increases the guanine exchange factor activity toward RHOA. Phosphorylation by CDK5 upon EPHA4 activation by EFNA1 may regulate dendritic spine morphogenesis. Highly expressed in brain specifically in caudate nucleus and to a lower extent in amygdala and hippocampus. Also detected in lung.

It localises to the cytoplasm. The protein localises to the membrane. It is found in the cell projection. The protein resides in the growth cone. Acts as a guanine nucleotide exchange factor (GEF) which differentially activates the GTPases RHOA, RAC1 and CDC42. Plays a role in axon guidance regulating ephrin-induced growth cone collapse and dendritic spine morphogenesis. Upon activation by ephrin through EPHA4, the GEF activity switches toward RHOA resulting in its activation. Activated RHOA promotes cone retraction at the expense of RAC1- and CDC42-stimulated growth cone extension. The sequence is that of Ephexin-1 (NGEF) from Homo sapiens (Human).